The primary structure comprises 428 residues: Elongation factor 1-alpha (428 aa).

Residues 5 to 225 (KPVLNVAFIG…DKFQPPEKPT (221 aa)) enclose the tr-type G domain. The G1 stretch occupies residues 14–21 (GHVDAGKS). Residue 14–21 (GHVDAGKS) participates in GTP binding. Serine 21 is a Mg(2+) binding site. Residues 70 to 74 (GVTID) form a G2 region. The tract at residues 91–94 (DCPG) is G3. GTP-binding positions include 91–95 (DCPGH) and 149–152 (NKMD). A G4 region spans residues 149–152 (NKMD). The G5 stretch occupies residues 189-191 (ASL).

Belongs to the TRAFAC class translation factor GTPase superfamily. Classic translation factor GTPase family. EF-Tu/EF-1A subfamily.

It localises to the cytoplasm. It catalyses the reaction GTP + H2O = GDP + phosphate + H(+). GTP hydrolase that promotes the GTP-dependent binding of aminoacyl-tRNA to the A-site of ribosomes during protein biosynthesis. This chain is Elongation factor 1-alpha, found in Methanocaldococcus jannaschii (strain ATCC 43067 / DSM 2661 / JAL-1 / JCM 10045 / NBRC 100440) (Methanococcus jannaschii).